Reading from the N-terminus, the 122-residue chain is uncharacterized protein (122 aa).

This is an uncharacterized protein from Caenorhabditis elegans.